A 131-amino-acid polypeptide reads, in one-letter code: Small ribosomal subunit protein uS8 (131 aa).

It belongs to the universal ribosomal protein uS8 family. Part of the 30S ribosomal subunit. Contacts proteins S5 and S12.

Functionally, one of the primary rRNA binding proteins, it binds directly to 16S rRNA central domain where it helps coordinate assembly of the platform of the 30S subunit. The polypeptide is Small ribosomal subunit protein uS8 (Bordetella avium (strain 197N)).